A 362-amino-acid chain; its full sequence is Peptide chain release factor 1 (362 aa).

An N5-methylglutamine modification is found at Gln-237. The segment covering Glu-284 to Thr-295 has biased composition (basic and acidic residues). Residues Glu-284 to Asp-304 form a disordered region.

This sequence belongs to the prokaryotic/mitochondrial release factor family. Methylated by PrmC. Methylation increases the termination efficiency of RF1.

It is found in the cytoplasm. Functionally, peptide chain release factor 1 directs the termination of translation in response to the peptide chain termination codons UAG and UAA. This is Peptide chain release factor 1 from Pseudoalteromonas atlantica (strain T6c / ATCC BAA-1087).